We begin with the raw amino-acid sequence, 62 residues long: Andropin (62 aa).

A signal peptide spans 1–22 (MKYFSVLVVLTLILAIVDQSDA).

Belongs to the andropin family. In terms of tissue distribution, ejaculatory duct of adult males.

It is found in the secreted. Male-specific peptide with moderate activity against Gram-positive bacteria. The sequence is that of Andropin (Anp) from Drosophila teissieri (Fruit fly).